We begin with the raw amino-acid sequence, 412 residues long: Multifunctional CCA protein (412 aa).

Residues Gly-8 and Arg-11 each coordinate ATP. CTP-binding residues include Gly-8 and Arg-11. The Mg(2+) site is built by Glu-21 and Asp-23. Positions 91, 137, and 140 each coordinate ATP. CTP-binding residues include Arg-91, Arg-137, and Arg-140. In terms of domain architecture, HD spans 228 to 329 (CGIHTLMSLQ…WRLLQRLDVL (102 aa)).

This sequence belongs to the tRNA nucleotidyltransferase/poly(A) polymerase family. Bacterial CCA-adding enzyme type 1 subfamily. As to quaternary structure, monomer. Can also form homodimers and oligomers. Mg(2+) serves as cofactor. Requires Ni(2+) as cofactor.

The catalysed reaction is a tRNA precursor + 2 CTP + ATP = a tRNA with a 3' CCA end + 3 diphosphate. It catalyses the reaction a tRNA with a 3' CCA end + 2 CTP + ATP = a tRNA with a 3' CCACCA end + 3 diphosphate. Its function is as follows. Catalyzes the addition and repair of the essential 3'-terminal CCA sequence in tRNAs without using a nucleic acid template. Adds these three nucleotides in the order of C, C, and A to the tRNA nucleotide-73, using CTP and ATP as substrates and producing inorganic pyrophosphate. tRNA 3'-terminal CCA addition is required both for tRNA processing and repair. Also involved in tRNA surveillance by mediating tandem CCA addition to generate a CCACCA at the 3' terminus of unstable tRNAs. While stable tRNAs receive only 3'-terminal CCA, unstable tRNAs are marked with CCACCA and rapidly degraded. This chain is Multifunctional CCA protein, found in Acinetobacter baumannii (strain SDF).